The primary structure comprises 209 residues: Uracil phosphoribosyltransferase (209 aa).

Residues R79, R104, and 131–139 (DPMLATGGS) each bind 5-phospho-alpha-D-ribose 1-diphosphate. Residues I194 and 199-201 (GDA) contribute to the uracil site. Position 200 (D200) interacts with 5-phospho-alpha-D-ribose 1-diphosphate.

This sequence belongs to the UPRTase family. Requires Mg(2+) as cofactor.

It carries out the reaction UMP + diphosphate = 5-phospho-alpha-D-ribose 1-diphosphate + uracil. The protein operates within pyrimidine metabolism; UMP biosynthesis via salvage pathway; UMP from uracil: step 1/1. With respect to regulation, allosterically activated by GTP. Its function is as follows. Catalyzes the conversion of uracil and 5-phospho-alpha-D-ribose 1-diphosphate (PRPP) to UMP and diphosphate. The polypeptide is Uracil phosphoribosyltransferase (Shouchella clausii (strain KSM-K16) (Alkalihalobacillus clausii)).